The chain runs to 475 residues: Protein FAM161A (475 aa).

The segment at 53–107 (ISDSSSSSASEKSCSHPALSVTSLSEPDLDGSSSLSTTTDEGLPDLEEKTPGESS) is disordered. 2 stretches are compositionally biased toward low complexity: residues 54–64 (SDSSSSSASEK) and 82–93 (DGSSSLSTTTDE). Positions 162 to 234 (VREQNRREKA…RERNRAALLA (73 aa)) form a coiled coil. The tract at residues 255–434 (KLRDLFRAKR…PTASSRGREQ (180 aa)) is required for interaction with CFAP418. The tract at residues 314-337 (RSACRRFRDPRSPAKPRGKHRRRC) is disordered. Residues 327-337 (AKPRGKHRRRC) are compositionally biased toward basic residues. Lys-377 is covalently cross-linked (Glycyl lysine isopeptide (Lys-Gly) (interchain with G-Cter in SUMO2)). The disordered stretch occupies residues 389-441 (EEILRETRRPGRSPRRKSPGRSSNPKPRPHECSPPMPTASSRGREQAIRRSEK). A compositionally biased stretch (basic residues) spans 398–407 (PGRSPRRKSP). Residues 430-441 (RGREQAIRRSEK) show a composition bias toward basic and acidic residues.

This sequence belongs to the FAM161 family. In terms of assembly, interacts (via central region) with CFAP418 (via N-terminus); the interaction is direct. Interacts (via C-terminus) with microtubules. Interacts with LCA5. Interacts with CEP290. Interacts with SDCCAG8. Interacts with FAM161B. Interacts with POC1B. Interacts with CEP78. Forms a microtubule-associated complex with POC5, CETN2 and POC1B. Interacts with CCDC15. As to expression, expressed in the retina.

The protein resides in the cytoplasm. It localises to the cytoskeleton. The protein localises to the cilium basal body. Its subcellular location is the cell projection. It is found in the cilium. The protein resides in the microtubule organizing center. It localises to the centrosome. The protein localises to the centriole. Involved in ciliogenesis. This chain is Protein FAM161A, found in Mus musculus (Mouse).